Consider the following 172-residue polypeptide: Small ribosomal subunit protein uS5 (172 aa).

Residues 17–80 enclose the S5 DRBM domain; it reads LKEKMIAINR…EEARRNMTKV (64 aa).

Belongs to the universal ribosomal protein uS5 family. In terms of assembly, part of the 30S ribosomal subunit. Contacts proteins S4 and S8.

Its function is as follows. With S4 and S12 plays an important role in translational accuracy. Located at the back of the 30S subunit body where it stabilizes the conformation of the head with respect to the body. The polypeptide is Small ribosomal subunit protein uS5 (Polaromonas naphthalenivorans (strain CJ2)).